A 119-amino-acid polypeptide reads, in one-letter code: MHELSLAGGILQLLEDAARRERFARVTLLRLEAGKLCGVEVRALRFALEAIASGTCLEGACIEIEEPEGQAWCLQCNAAVALAERGAPCSGCGGYRLQPTAGTELRVMDMLVEDHWCPE.

His-2 contacts Ni(2+). The Zn(2+) site is built by Cys-73, Cys-76, Cys-89, and Cys-92.

Belongs to the HypA/HybF family.

Involved in the maturation of [NiFe] hydrogenases. Required for nickel insertion into the metal center of the hydrogenase. This Cupriavidus necator (strain ATCC 17699 / DSM 428 / KCTC 22496 / NCIMB 10442 / H16 / Stanier 337) (Ralstonia eutropha) protein is Hydrogenase maturation factor HypA.